We begin with the raw amino-acid sequence, 1076 residues long: MNEQDLLNSLRRDLNLPNLGKSHDGSEAVESTFPEKKESSLSAQQPHVDDQRSSLLSLLNAGLNASNQSPSNSGPKYYASHSSSTDALLQAFRDGAKPSGTASGADVKRSDSESTEATSNERPFNPVSAANLERLLMSSTGPQTPINGELKSNDSQDTAFQSSRNMPSDTSVASPDYSHSQSSSPIANYQESGNSEEPHKAEEQQQLSIYQLDNPGSGNYVWETVISPDKFETSTFAKCERNDIAIINRELDAQDNQLIHTNEDFIAYAVHREPIIRVIEISTGKSFLLHNNSPNKFVSVAWGNDSVIKNRLMAIDTTGQVLIFAVDIATSTSEIIFQLSGAQSLSDPIKSRFHWYPKSSTRFAVALSKHIIFFDLDLLNNISFPIPRSINAIQQLPCFLIDTGISAKEYDFSYDGTVFATVDKDALIKIYTVPTTFPSTPDKRPVPSEVSPIAIFTTRMERGPSKNYEKPINLRFISTPGTNNSRYLVIVYVMNQLITLFDLYSKRNIQTFRFNNRPTAATTTSFSQFSVDNERSTLLVGNPPSNSIYFFLFAKDETVSEQAPIYNSTYELILASLNTSEPVPADAKFSVIVAKKFEKAACISFTACKILESEDKYCIVVSNTDGYEYYSIPTSILDKTGKTVRSLESVQNYDADIGGTIDLTERHSTASPSTVNSGFSTPRSQATGFSKKKKDKGERFETKDKSSSVLSPSSYSASTFDAIPMDSIVSNILASLEKSVHKNYESLRSQLLEYKAANEKHTEAILSVVSSTLTENTGKILESVVEKSMQVALKEEIANSVRNALKNNLEKIESFLENSIAELQNSVREDFDKQTSSLAQLRYSIQNVAHAQKESEVKYNELNEQVKTLEGYVETVLEKFNDLKIENKVPETAPDVVPSSYPPAAESNVSVSSDTSTKDVEKQEPSSAEQPAQGIAESLRRLKEYVKAGSVKECVAEWCNMPSVAGFDVLSEISYDRMLENCSNLLLLTFIYHISLLDSVDDDRLSKRMEYISRICLNIDVNDPKVETVVHPVLTLTREALLRQSEFFSPIFKRRLVVLLRALDGKISEISVASSN.

2 stretches are compositionally biased toward low complexity: residues 1–19 and 53–69; these read MNEQ…LPNL and SSLL…SNQS. 3 disordered regions span residues 1–82, 95–127, and 139–204; these read MNEQ…ASHS, GAKP…FNPV, and STGP…AEEQ. Residues 70–82 show a composition bias toward polar residues; it reads PSNSGPKYYASHS. Residues 153 to 173 show a composition bias toward polar residues; the sequence is NDSQDTAFQSSRNMPSDTSVA. Low complexity predominate over residues 174–184; it reads SPDYSHSQSSS. Over residues 185–195 the composition is skewed to polar residues; that stretch reads PIANYQESGNS. WD repeat units follow at residues 292 to 334 and 402 to 441; these read NSPN…STSE and DTGI…PSTP. 2 disordered regions span residues 666-714 and 892-934; these read RHST…SPSS and TAPD…PAQG. Over residues 669-688 the composition is skewed to polar residues; sequence TASPSTVNSGFSTPRSQATG. A phosphoserine mark is found at serine 671 and serine 673. Residue threonine 674 is modified to Phosphothreonine. Residues 695-706 are compositionally biased toward basic and acidic residues; the sequence is DKGERFETKDKS. The interaction with dcp2 stretch occupies residues 789 to 1076; it reads MQVALKEEIA…ISEISVASSN (288 aa). Serine 1075 carries the phosphoserine modification.

This sequence belongs to the WD repeat EDC4 family. Interacts with dcp2; via C-terminus.

It is found in the cytoplasm. It localises to the P-body. Involved in P-body formation. Acts as a functional homolog of human EDC4, which plays a role in mRNA decapping in the process of mRNA degradation. Enhances the decapping activity of dcp2. Together with edc3, acts as a scaffolding protein sufficient for the phase transition of the components of the 5' to 3' mRNA degradation machinery to form P-bodies. Intermolecular interactions between the edc3 Sm domain and at least 10 helical leucine-rich motifs in dcp2 and pdc1 build the core of the interaction network of this spontaneous clustering process. The sequence is that of Enhancer of mRNA-decapping protein 4-like protein pdc1 from Schizosaccharomyces pombe (strain 972 / ATCC 24843) (Fission yeast).